The primary structure comprises 1064 residues: Carbamoyl phosphate synthase large chain (1064 aa).

The tract at residues 1-401 (MPKRADIKKI…ALMKAIRSLE (401 aa)) is carboxyphosphate synthetic domain. R129, R169, G175, G176, K208, I210, E215, G241, I242, H243, Q284, and E298 together coordinate ATP. The 195-residue stretch at 133-327 (KQLMEALKEP…IAKMAAKIAI (195 aa)) folds into the ATP-grasp 1 domain. Mg(2+) contacts are provided by Q284, E298, and N300. Residues Q284, E298, and N300 each contribute to the Mn(2+) site. The oligomerization domain stretch occupies residues 402–546 (IGTFALDDLT…YSTYELENES (145 aa)). Residues 547-929 (LKEKRPSVLV…ALYKAFVAAG (383 aa)) are carbamoyl phosphate synthetic domain. In terms of domain architecture, ATP-grasp 2 spans 671-861 (NQVIKKLDLS…LAQLATRVML (191 aa)). R707, S746, L748, E752, G777, V778, H779, S780, Q820, and E832 together coordinate ATP. Q820, E832, and N834 together coordinate Mg(2+). 3 residues coordinate Mn(2+): Q820, E832, and N834. The MGS-like domain occupies 930–1064 (FKVHEHGNVL…VSAINKGDKS (135 aa)). An allosteric domain region spans residues 930–1064 (FKVHEHGNVL…VSAINKGDKS (135 aa)).

The protein belongs to the CarB family. In terms of assembly, composed of two chains; the small (or glutamine) chain promotes the hydrolysis of glutamine to ammonia, which is used by the large (or ammonia) chain to synthesize carbamoyl phosphate. Tetramer of heterodimers (alpha,beta)4. The cofactor is Mg(2+). Mn(2+) serves as cofactor.

The catalysed reaction is hydrogencarbonate + L-glutamine + 2 ATP + H2O = carbamoyl phosphate + L-glutamate + 2 ADP + phosphate + 2 H(+). It carries out the reaction hydrogencarbonate + NH4(+) + 2 ATP = carbamoyl phosphate + 2 ADP + phosphate + 2 H(+). It functions in the pathway amino-acid biosynthesis; L-arginine biosynthesis; carbamoyl phosphate from bicarbonate: step 1/1. Its pathway is pyrimidine metabolism; UMP biosynthesis via de novo pathway; (S)-dihydroorotate from bicarbonate: step 1/3. Its function is as follows. Large subunit of the glutamine-dependent carbamoyl phosphate synthetase (CPSase). CPSase catalyzes the formation of carbamoyl phosphate from the ammonia moiety of glutamine, carbonate, and phosphate donated by ATP, constituting the first step of 2 biosynthetic pathways, one leading to arginine and/or urea and the other to pyrimidine nucleotides. The large subunit (synthetase) binds the substrates ammonia (free or transferred from glutamine from the small subunit), hydrogencarbonate and ATP and carries out an ATP-coupled ligase reaction, activating hydrogencarbonate by forming carboxy phosphate which reacts with ammonia to form carbamoyl phosphate. The sequence is that of Carbamoyl phosphate synthase large chain from Oenococcus oeni (strain ATCC BAA-331 / PSU-1).